The primary structure comprises 129 residues: L-ectoine synthase (129 aa).

Belongs to the ectoine synthase family.

It carries out the reaction (2S)-4-acetamido-2-aminobutanoate = L-ectoine + H2O. It functions in the pathway amine and polyamine biosynthesis; ectoine biosynthesis; L-ectoine from L-aspartate 4-semialdehyde: step 3/3. In terms of biological role, catalyzes the circularization of gamma-N-acetyl-alpha,gamma-diaminobutyric acid (ADABA) to ectoine (1,4,5,6-tetrahydro-2-methyl-4-pyrimidine carboxylic acid), which is an excellent osmoprotectant. The chain is L-ectoine synthase from Mycobacterium sp. (strain KMS).